The primary structure comprises 73 residues: Small ribosomal subunit protein bS18 (73 aa).

Belongs to the bacterial ribosomal protein bS18 family. As to quaternary structure, part of the 30S ribosomal subunit. Forms a tight heterodimer with protein bS6.

Functionally, binds as a heterodimer with protein bS6 to the central domain of the 16S rRNA, where it helps stabilize the platform of the 30S subunit. The sequence is that of Small ribosomal subunit protein bS18 from Prochlorococcus marinus (strain NATL2A).